Reading from the N-terminus, the 103-residue chain is Small ribosomal subunit protein uS10 (103 aa).

Belongs to the universal ribosomal protein uS10 family. As to quaternary structure, part of the 30S ribosomal subunit.

Involved in the binding of tRNA to the ribosomes. The polypeptide is Small ribosomal subunit protein uS10 (Neisseria gonorrhoeae (strain NCCP11945)).